The sequence spans 700 residues: Constitutive coactivator of peroxisome proliferator-activated receptor gamma (700 aa).

This sequence belongs to the constitutive coactivator of PPAR-gamma family. In terms of assembly, interacts with ESR1 and RXRA. Interacts with PPARG; in a ligand-independent manner.

The protein resides in the nucleus. Functions as a transactivator of PPARG and ESR1. Functions in adipogenesis through PPARG activation. The chain is Constitutive coactivator of peroxisome proliferator-activated receptor gamma (FAM120B) from Bos taurus (Bovine).